A 304-amino-acid chain; its full sequence is UDP-3-O-acyl-N-acetylglucosamine deacetylase (304 aa).

H79, H238, and D242 together coordinate Zn(2+). Residue H265 is the Proton donor of the active site.

The protein belongs to the LpxC family. Zn(2+) is required as a cofactor.

It catalyses the reaction a UDP-3-O-[(3R)-3-hydroxyacyl]-N-acetyl-alpha-D-glucosamine + H2O = a UDP-3-O-[(3R)-3-hydroxyacyl]-alpha-D-glucosamine + acetate. The protein operates within glycolipid biosynthesis; lipid IV(A) biosynthesis; lipid IV(A) from (3R)-3-hydroxytetradecanoyl-[acyl-carrier-protein] and UDP-N-acetyl-alpha-D-glucosamine: step 2/6. Catalyzes the hydrolysis of UDP-3-O-myristoyl-N-acetylglucosamine to form UDP-3-O-myristoylglucosamine and acetate, the committed step in lipid A biosynthesis. The polypeptide is UDP-3-O-acyl-N-acetylglucosamine deacetylase (Pseudoalteromonas atlantica (strain T6c / ATCC BAA-1087)).